The chain runs to 377 residues: MEDDGYNYYGADNQSECDYADWKPSGALIPAIYMLVFLLGTTGNGLVLWTVFRTSREKRRSADIFIASLAVADLTFVVTLPLWATYTYREFDWPFGTFSCKLSSYLIFVNMYASVFCLTGLSFDRYLAIVRPVANARLRLRVSGAVATAVLWVLAALLAVPVMVFRSTDASENGTKIQCYMDYSMVATSNSEWAWEVGLGVSSTAVGFVVPFTIMLTCYFFIAQTIAGHFRKERIEGLRKRRRLLSIIVVLVVTFALCWMPYHLVKTLYMLGSLLHWPCDFDIFLMNVFPYCTCISYVNSCLNPFLYAFFDPRFRQACTSMLCCDQSGCKGTPHSSSAEKSASYSSGHSQGPGPNMGKGGEQMHEKSIPYSQETLVD.

Residues 1–28 are Extracellular-facing; that stretch reads MEDDGYNYYGADNQSECDYADWKPSGAL. The N-linked (GlcNAc...) asparagine glycan is linked to asparagine 13. 2 cysteine pairs are disulfide-bonded: cysteine 17/cysteine 279 and cysteine 100/cysteine 179. The helical transmembrane segment at 29-52 threads the bilayer; it reads IPAIYMLVFLLGTTGNGLVLWTVF. Topologically, residues 53 to 62 are cytoplasmic; the sequence is RTSREKRRSA. Residues 63–84 form a helical membrane-spanning segment; it reads DIFIASLAVADLTFVVTLPLWA. Residues 85 to 97 are Extracellular-facing; sequence TYTYREFDWPFGT. The chain crosses the membrane as a helical span at residues 98-123; it reads FSCKLSSYLIFVNMYASVFCLTGLSF. Residues 124 to 144 lie on the Cytoplasmic side of the membrane; it reads DRYLAIVRPVANARLRLRVSG. A helical transmembrane segment spans residues 145–162; the sequence is AVATAVLWVLAALLAVPV. Residues 163 to 196 lie on the Extracellular side of the membrane; it reads MVFRSTDASENGTKIQCYMDYSMVATSNSEWAWE. N-linked (GlcNAc...) asparagine glycosylation occurs at asparagine 173. Residues 197–221 form a helical membrane-spanning segment; it reads VGLGVSSTAVGFVVPFTIMLTCYFF. Over 222 to 244 the chain is Cytoplasmic; the sequence is IAQTIAGHFRKERIEGLRKRRRL. Residues 245–268 form a helical membrane-spanning segment; the sequence is LSIIVVLVVTFALCWMPYHLVKTL. The Extracellular segment spans residues 269-287; sequence YMLGSLLHWPCDFDIFLMN. The chain crosses the membrane as a helical span at residues 288-310; the sequence is VFPYCTCISYVNSCLNPFLYAFF. Residues 311-377 are Cytoplasmic-facing; it reads DPRFRQACTS…IPYSQETLVD (67 aa). A disordered region spans residues 334–377; it reads HSSSAEKSASYSSGHSQGPGPNMGKGGEQMHEKSIPYSQETLVD. Residues 335 to 349 show a composition bias toward low complexity; sequence SSSAEKSASYSSGHS.

Belongs to the G-protein coupled receptor 1 family. In terms of assembly, homodimer; dimerization inhibits APLNR-mediated G protein and beta-arrestin signaling pathways compared to monomeric APLNR. In terms of tissue distribution, expressed in coronary endothelial cells (at protein level). Expressed in the embryo, allantoic and endothelial precursor cells of the yolk sac at 8 days post-coitum (dpc). Expressed in the secondary heart field and somite at 8.25 dpc. Expressed in fetal allantoic endothelial cells at 9 dpc. Expressed in the allantoid and the invading fetal vasculature of the placenta at 9.5 dpc. Expressed in endothelial cells adjacent to syncytiotrophoblast cells at 10.5 dpc. Expressed weakly in the embryonic heart at 11.5 dpc. Expressed in the adult heart. Expressed in endothelial cells and cardiomyocytes and weakly expressed in fibroblasts.

Its subcellular location is the cell membrane. G protein-coupled receptor for peptide hormones apelin (APLN) and apelin receptor early endogenous ligand (APELA), that plays a role in the regulation of normal cardiovascular function and fluid homeostasis. When acting as apelin receptor, activates both G(i) protein pathway that inhibits adenylate cyclase activity, and the beta-arrestin pathway leading to internalization of the receptor. APLNR/APJ receptor is also activated by mechanical strech in a G-protein-independent fashion to induce beta-arrestin signaling leading to cardiac hypertrophy. However, the presence of apelin ligand blunts cardiac hypertrophic induction from APLNR/APJ on response to pathological stimuli. Plays a key role in early development such as gastrulation, blood vessels formation and heart morphogenesis by acting as a receptor for APELA hormone. May promote angioblast migration toward the embryonic midline, i.e. the position of the future vessel formation, during vasculogenesis. Promotes sinus venosus (SV)-derived endothelial cells migration into the developing heart to promote coronary blood vessel development. Also plays a role in various processes in adults such as regulation of blood vessel formation, blood pressure and heart contractility and protection from cardiac hypertrophy and heart failure. In Mus musculus (Mouse), this protein is Apelin receptor.